A 283-amino-acid chain; its full sequence is Non-selective voltage-gated ion channel VDAC1 (283 aa).

Ala-2 is subject to N-acetylalanine. Lys-12 is a binding site for ATP. Lys-12 is covalently cross-linked (Glycyl lysine isopeptide (Lys-Gly) (interchain with G-Cter in ubiquitin)). At Ser-13 the chain carries Phosphoserine. Thr-19 carries the phosphothreonine modification. Lys-20 contacts ATP. N6-acetyllysine; alternate is present on Lys-20. An N6-succinyllysine; alternate modification is found at Lys-20. Residue Lys-20 forms a Glycyl lysine isopeptide (Lys-Gly) (interchain with G-Cter in ubiquitin); alternate linkage. 2 beta stranded membrane passes run 26–35 (LIKLDLKTKS) and 39–47 (LEFTSSGSA). Residues Lys-53 and Lys-61 each participate in a glycyl lysine isopeptide (Lys-Gly) (interchain with G-Cter in ubiquitin) cross-link. Residues 54–64 (VTGSLETKYRW) traverse the membrane as a beta stranded segment. Tyr-67 is modified (phosphotyrosine). A run of 3 beta stranded transmembrane segments spans residues 69–76 (LTFTEKWN), 80–89 (TLGTEITVED), and 95–104 (LKLTFDSSFS). Thr-107 is modified (phosphothreonine). Residue Lys-109 is modified to N6-acetyllysine; alternate. Lys-109 is covalently cross-linked (Glycyl lysine isopeptide (Lys-Gly) (interchain with G-Cter in ubiquitin); alternate). Lys-110 participates in a covalent cross-link: Glycyl lysine isopeptide (Lys-Gly) (interchain with G-Cter in ubiquitin). The next 4 membrane-spanning stretches (beta stranded) occupy residues 111–120 (NAKIKTGYKR), 123–130 (VNLGCDVD), 137–145 (SIRGALVLG), and 150–158 (LAGYQMNFE). Residue Lys-161 forms a Glycyl lysine isopeptide (Lys-Gly) (interchain with G-Cter in ubiquitin) linkage. The next 6 beta stranded transmembrane spans lie at 163 to 175 (RVTQ…GYKT), 178 to 185 (FQLHTNVN), 189 to 198 (EFGGSIYQKV), 202 to 211 (LETAVNLAWT), 218 to 227 (RFGIAAKYQI), and 231 to 238 (ACFSAKVN). Ser-193 bears the Phosphoserine; by NEK1 mark. Ser-240 is modified (phosphoserine). 242 to 244 (LIG) lines the NAD(+) pocket. A beta stranded transmembrane segment spans residues 242 to 251 (LIGLGYTQTL). Position 252 is an N6-acetyllysine (Lys-252). The beta stranded transmembrane segment at 254–263 (GIKLTLSALL) threads the bilayer. 260 to 264 (SALLD) is a binding site for NAD(+). N6-acetyllysine; alternate is present on Lys-266. Lys-266 is covalently cross-linked (Glycyl lysine isopeptide (Lys-Gly) (interchain with G-Cter in ubiquitin); alternate). The beta stranded transmembrane segment at 273–282 (HKLGLGLEFQ) threads the bilayer. Lys-274 is covalently cross-linked (Glycyl lysine isopeptide (Lys-Gly) (interchain with G-Cter in ubiquitin)).

The protein belongs to the eukaryotic mitochondrial porin family. As to quaternary structure, homodimer and homotrimer; in response to cyclic AMP or calcium; oligomerization is required for scramblase activity. Component of the mitochondrial permeability transition pore complex (mPTPC), at least composed of SPG7, VDAC1 and PPIF. Interacts with SPG7, NIPSNAP2 and SLC25A30. Interacts with hexokinases including HK1. The HK1-VDAC1 complex interacts with ATF2. Interacts with BCL2L1. Interacts with BAK1. Interacts with RTL10/BOP (via BH3 domain). Interacts with amyloid-beta and APP; induces VDAC1 dephosphorylation. Interacts with TMEM41B. Interacts with BCAP31. Interacts with HSPA9; this interaction couples ITPR1 to VDAC1. Post-translationally, phosphorylation at Ser-193 by NEK1 promotes the closed conformational state preventing excessive mitochondrial membrane permeability and subsequent apoptotic cell death after injury. Phosphorylation by the AKT-GSK3B axis stabilizes the protein probably by preventing ubiquitin-mediated proteasomal degradation. In terms of processing, ubiquitinated. Undergoes monoubiquitination and polyubiquitination by PRKN; monoubiquitination at Lys-274 inhibits apoptosis, whereas polyubiquitination leads to its degradation and promotes mitophagy. Deubiquitinated by USP30.

It is found in the mitochondrion outer membrane. The protein resides in the cell membrane. Its subcellular location is the membrane raft. The enzyme catalyses chloride(in) = chloride(out). The catalysed reaction is K(+)(in) = K(+)(out). It catalyses the reaction ATP(in) = ATP(out). It carries out the reaction Ca(2+)(in) = Ca(2+)(out). The enzyme catalyses Na(+)(in) = Na(+)(out). The catalysed reaction is Mg(2+)(in) = Mg(2+)(out). It catalyses the reaction L-glutamate(out) = L-glutamate(in). It carries out the reaction dopamine(out) = dopamine(in). The enzyme catalyses acetylcholine(in) = acetylcholine(out). The catalysed reaction is Fe(III)-[cytochrome c](out) = Fe(III)-[cytochrome c](in). It catalyses the reaction a 1,2-diacyl-sn-glycero-3-phosphocholine(in) = a 1,2-diacyl-sn-glycero-3-phosphocholine(out). It carries out the reaction a 1,2-diacyl-sn-glycero-3-phospho-L-serine(in) = a 1,2-diacyl-sn-glycero-3-phospho-L-serine(out). With respect to regulation, inhibited by nitric oxide. Its function is as follows. Non-selective voltage-gated ion channel that mediates the transport of anions and cations through the mitochondrion outer membrane and plasma membrane. The channel at the outer mitochondrial membrane allows diffusion of small hydrophilic molecules; in the plasma membrane it is involved in cell volume regulation and apoptosis. It adopts an open conformation at low or zero membrane potential and a closed conformation at potentials above 30-40 mV. The open state has a weak anion selectivity whereas the closed state is cation-selective. Binds various signaling molecules, including the sphingolipid ceramide, the phospholipid phosphatidylcholine, and the sterols cholesterol and oxysterol. In depolarized mitochondria, acts downstream of PRKN and PINK1 to promote mitophagy or prevent apoptosis; polyubiquitination by PRKN promotes mitophagy, while monoubiquitination by PRKN decreases mitochondrial calcium influx which ultimately inhibits apoptosis. May participate in the formation of the permeability transition pore complex (PTPC) responsible for the release of mitochondrial products that triggers apoptosis. May mediate ATP export from cells. Part of a complex composed of HSPA9, ITPR1 and VDAC1 that regulates mitochondrial calcium-dependent apoptosis by facilitating calcium transport from the ER lumen to the mitochondria intermembrane space thus providing calcium for the downstream calcium channel MCU that directly releases it into mitochondria matrix. Mediates cytochrome c efflux. Functionally, catalyzes the scrambling of phospholipids across the outer mitochondrial membrane; the mechanism is unrelated to channel activity and is capable of translocating both anionic and zwitterionic phospholipids. This chain is Non-selective voltage-gated ion channel VDAC1, found in Sus scrofa (Pig).